The chain runs to 271 residues: uncharacterized protein (271 aa).

The protein belongs to the HAD-like hydrolase superfamily.

This is an uncharacterized protein from Staphylococcus aureus (strain NCTC 8325 / PS 47).